Consider the following 1325-residue polypeptide: MVVFLSKNVRSLLSIFKKKGQKQDEQRKLTVHYTASQHYQENVFIEGSRPKYLEDLHTEAQEGLKILQQEEEDTSSKERNESLENDSTSGHSIISVSTASAVSTRPVLTRQGSTFKPLNPVKRLDKSKRRSRRTTIMGIPQQVQRELDMARGTMLQQLPNRGHDSEDDSSGTVVLQTIDGDLPSVNHEGARVHLQNIEVLQASRDEDLLLNHIHSVYQDELNRKLGLGACPTQRPKSLAVPGMTTYSFLQEPQGPVMSISPQATYLSKIIPNAVLPAAIDIIEINHDHNRCSASTASKGSMASASPSSSRSGSGTNQAPPTTSPSRSNSQSSETIVSNSSTISSKGKCLPTFDADSAKDISVLIPKDMSVSSSSSWKSSEGKGTNHRLNPREYGDAGDNVRNSHSFSRSLSVMKTKLPPAPPQRTYSLHHENMQRQREQGDIQDPKDVAPNNNEQTNRDISSTKENHQSAKNKKSSVHSLELRSDFHTTVKSSPLSPDQVFTGRHARSGNSSPQKTRECGENFDRTLSPSSGYSSQSGTPTHSPKEVSPSSPGKRRVKPSKPERVCAKTSPVVSVSSSLTSLSSVISDTAHQDIQTNTTSSEPLKFSPPLTTVKNKVTPTHQTIALRTLFNIPPPPKVKAPSPPPPETWVQNKQTLELLCGPGPNIHKLESLISKTQNKNSMQINEQVIPKTQTTEETKTENTVVKELTKSASPQVHKQMMVEPPDVRHTEKSILHNELKSPETLAKVNQIPHTQDEKTIEDQKDRWSQTLPTTNVPSIIVDQSMLSQTNSIEKTKAATVSSNENQRNCIVTDIVNRISVQTLNIEVPEVNGVSPPPSPPPEHHPPPPPIKKMSDMSVSIPPSEKEEQKQVEQVTFPESSWPPPPPPMEESTELMFEEQDELDFPPPPPSFIHEPMSEISDDFHEESCEEVSIKLLSTNVSDMDSSPEQDSERHTILPKRIVQNSVEVRQQDKSSDSVSEFLEDQAEIENTNVASTIISSHLPDKNLHEKETLVSTSIPLAPPLPVEEQSTINFRKQLSFVDKDNRSKELLCRHKSTPIPKEDANIPLVTPSLLQMVRLRSVNVGEDQVNNDSKPSTEPTTNEDHSISSQVTPQKPIRRSLTLKSNSPAKSSSASSAVPSMCLQEAIRMKTAAMSCSGVPAMLNLRSSSGSSATSPVPSPKSPDGCDLLMSPASTASFIFSKSTKRVVIETPTSPDVQASLKQSLAAEIMQVSDQAKTMITNGTKKPIKVPPPVAKKPVHGSNPPNKMENATQDKTEILTNKQIMRVDVNGQSDQVHPAGQRAQSLGNQEQASKEAFAMNMSICA.

The stretch at 53–85 forms a coiled coil; it reads LEDLHTEAQEGLKILQQEEEDTSSKERNESLEN. 10 disordered regions span residues 68-92, 111-131, 291-348, 368-570, 595-614, 829-891, 935-981, 1084-1138, 1243-1272, and 1293-1313; these read QQEE…SGHS, QGST…KRRS, CSAS…KGKC, MSVS…AKTS, QTNT…TTVK, EVNG…MEES, LLST…VSEF, VGED…SSAV, GTKK…ENAT, and SDQV…EQAS. Residues 296 to 334 show a composition bias toward low complexity; it reads ASKGSMASASPSSSRSGSGTNQAPPTTSPSRSNSQSSET. Polar residues predominate over residues 335 to 344; sequence IVSNSSTISS. A compositionally biased stretch (low complexity) spans 369-378; the sequence is SVSSSSSWKS. Residues 400 to 412 are compositionally biased toward polar residues; it reads VRNSHSFSRSLSV. Basic and acidic residues predominate over residues 428–447; the sequence is LHHENMQRQREQGDIQDPKD. Over residues 450-460 the composition is skewed to polar residues; it reads PNNNEQTNRDI. Positions 515 to 524 are enriched in basic and acidic residues; sequence KTRECGENFD. A compositionally biased stretch (low complexity) spans 528-541; the sequence is SPSSGYSSQSGTPT. A compositionally biased stretch (pro residues) spans 834–850; sequence SPPPSPPPEHHPPPPPI. 2 stretches are compositionally biased toward polar residues: residues 935 to 948 and 1088 to 1100; these read LLST…SSPE and QVNN…TEPT. The span at 1124-1138 shows a compositional bias: low complexity; the sequence is KSNSPAKSSSASSAV. Polar residues predominate over residues 1302–1311; it reads RAQSLGNQEQ.

Able to directly activate the TNF-NFkappaB signaling pathway. The polypeptide is NHS-like protein 3 (nhsl3) (Danio rerio (Zebrafish)).